A 451-amino-acid polypeptide reads, in one-letter code: UPF0210 protein Asuc_1169 (451 aa).

It belongs to the UPF0210 family. Homodimer.

In Actinobacillus succinogenes (strain ATCC 55618 / DSM 22257 / CCUG 43843 / 130Z), this protein is UPF0210 protein Asuc_1169.